A 32-amino-acid chain; its full sequence is Photosystem II reaction center protein T (32 aa).

A helical transmembrane segment spans residues 3-23; the sequence is ALVYTFLLIGTLVVIFFAIFF.

Belongs to the PsbT family. PSII is composed of 1 copy each of membrane proteins PsbA, PsbB, PsbC, PsbD, PsbE, PsbF, PsbH, PsbI, PsbJ, PsbK, PsbL, PsbM, PsbT, PsbX, PsbY, PsbZ, Psb30/Ycf12, at least 3 peripheral proteins of the oxygen-evolving complex and a large number of cofactors. It forms dimeric complexes.

The protein resides in the plastid. It localises to the chloroplast thylakoid membrane. In terms of biological role, found at the monomer-monomer interface of the photosystem II (PS II) dimer, plays a role in assembly and dimerization of PSII. PSII is a light-driven water plastoquinone oxidoreductase, using light energy to abstract electrons from H(2)O, generating a proton gradient subsequently used for ATP formation. This chain is Photosystem II reaction center protein T, found in Emiliania huxleyi (Coccolithophore).